The following is a 647-amino-acid chain: tRNA uridine 5-carboxymethylaminomethyl modification enzyme MnmG (647 aa).

FAD contacts are provided by residues Gly-22 to Gly-27, Val-134, and Ser-189. NAD(+) is bound at residue Gly-283–Phe-297. Gln-380 is a binding site for FAD.

This sequence belongs to the MnmG family. Homodimer. Heterotetramer of two MnmE and two MnmG subunits. Requires FAD as cofactor.

It localises to the cytoplasm. NAD-binding protein involved in the addition of a carboxymethylaminomethyl (cmnm) group at the wobble position (U34) of certain tRNAs, forming tRNA-cmnm(5)s(2)U34. In Desulfotalea psychrophila (strain LSv54 / DSM 12343), this protein is tRNA uridine 5-carboxymethylaminomethyl modification enzyme MnmG.